Here is a 970-residue protein sequence, read N- to C-terminus: Bifunctional glutamine synthetase adenylyltransferase/adenylyl-removing enzyme (970 aa).

The tract at residues 1–454 (MNSLPPRPSL…HFQQVFAAPQ (454 aa)) is adenylyl removase. The tract at residues 468-970 (QAVLASIWAG…WRRVMEEGKA (503 aa)) is adenylyl transferase.

It belongs to the GlnE family. Mg(2+) is required as a cofactor.

The enzyme catalyses [glutamine synthetase]-O(4)-(5'-adenylyl)-L-tyrosine + phosphate = [glutamine synthetase]-L-tyrosine + ADP. The catalysed reaction is [glutamine synthetase]-L-tyrosine + ATP = [glutamine synthetase]-O(4)-(5'-adenylyl)-L-tyrosine + diphosphate. Its function is as follows. Involved in the regulation of glutamine synthetase GlnA, a key enzyme in the process to assimilate ammonia. When cellular nitrogen levels are high, the C-terminal adenylyl transferase (AT) inactivates GlnA by covalent transfer of an adenylyl group from ATP to specific tyrosine residue of GlnA, thus reducing its activity. Conversely, when nitrogen levels are low, the N-terminal adenylyl removase (AR) activates GlnA by removing the adenylyl group by phosphorolysis, increasing its activity. The regulatory region of GlnE binds the signal transduction protein PII (GlnB) which indicates the nitrogen status of the cell. The chain is Bifunctional glutamine synthetase adenylyltransferase/adenylyl-removing enzyme from Thioalkalivibrio sulfidiphilus (strain HL-EbGR7).